We begin with the raw amino-acid sequence, 250 residues long: Triosephosphate isomerase (250 aa).

Residue 9–11 coordinates substrate; that stretch reads NWK. The active-site Electrophile is histidine 95. Residue glutamate 167 is the Proton acceptor of the active site. Substrate is bound by residues glycine 173, serine 212, and 233-234; that span reads GG.

Belongs to the triosephosphate isomerase family. As to quaternary structure, homodimer.

The protein resides in the cytoplasm. The enzyme catalyses D-glyceraldehyde 3-phosphate = dihydroxyacetone phosphate. It participates in carbohydrate biosynthesis; gluconeogenesis. Its pathway is carbohydrate degradation; glycolysis; D-glyceraldehyde 3-phosphate from glycerone phosphate: step 1/1. Involved in the gluconeogenesis. Catalyzes stereospecifically the conversion of dihydroxyacetone phosphate (DHAP) to D-glyceraldehyde-3-phosphate (G3P). The polypeptide is Triosephosphate isomerase (Endomicrobium trichonymphae).